The chain runs to 41 residues: Photosystem I reaction center subunit VIII (41 aa).

The helical transmembrane segment at 12–32 (WIMIPVTCWLFPVVVMGLLFI) threads the bilayer.

The protein belongs to the PsaI family.

Its subcellular location is the cellular thylakoid membrane. Its function is as follows. May help in the organization of the PsaL subunit. The protein is Photosystem I reaction center subunit VIII of Cyanothece sp. (strain PCC 7425 / ATCC 29141).